The following is a 340-amino-acid chain: DNA-directed RNA polymerase subunit alpha (340 aa).

The segment at 1–236 (MLSLSKNWNT…EQLQLFISFE (236 aa)) is alpha N-terminal domain (alpha-NTD). Residues 251–340 (FSPYLLKRVD…LSKRYEDSYN (90 aa)) are alpha C-terminal domain (alpha-CTD).

This sequence belongs to the RNA polymerase alpha chain family. In terms of assembly, homodimer. The RNAP catalytic core consists of 2 alpha, 1 beta, 1 beta' and 1 omega subunit. When a sigma factor is associated with the core the holoenzyme is formed, which can initiate transcription.

The enzyme catalyses RNA(n) + a ribonucleoside 5'-triphosphate = RNA(n+1) + diphosphate. Functionally, DNA-dependent RNA polymerase catalyzes the transcription of DNA into RNA using the four ribonucleoside triphosphates as substrates. The sequence is that of DNA-directed RNA polymerase subunit alpha from Rickettsia africae (strain ESF-5).